A 240-amino-acid chain; its full sequence is Ubiquinone biosynthesis O-methyltransferase (240 aa).

4 residues coordinate S-adenosyl-L-methionine: Arg44, Gly64, Asp85, and Met129.

The protein belongs to the methyltransferase superfamily. UbiG/COQ3 family.

It catalyses the reaction a 3-demethylubiquinol + S-adenosyl-L-methionine = a ubiquinol + S-adenosyl-L-homocysteine + H(+). It carries out the reaction a 3-(all-trans-polyprenyl)benzene-1,2-diol + S-adenosyl-L-methionine = a 2-methoxy-6-(all-trans-polyprenyl)phenol + S-adenosyl-L-homocysteine + H(+). It participates in cofactor biosynthesis; ubiquinone biosynthesis. O-methyltransferase that catalyzes the 2 O-methylation steps in the ubiquinone biosynthetic pathway. This is Ubiquinone biosynthesis O-methyltransferase from Escherichia coli O127:H6 (strain E2348/69 / EPEC).